The chain runs to 837 residues: Tuftelin-interacting protein 11 (837 aa).

2 stretches are compositionally biased toward basic and acidic residues: residues 1-13 and 53-64; these read MSLS…GEGR and VWAERDSDDERP. 3 disordered regions span residues 1–21, 53–72, and 85–133; these read MSLS…DDER, VWAE…KRAR, and LKKG…KGFA. Residues 1–50 form a required for interaction with DHX15 region; the sequence is MSLSHLYRDGEGRIDDDDDERENFEITDWDLQNEFNPNRQRHWQTKEEAT. Phosphoserine occurs at positions 2, 59, and 98. Acidic residues predominate over residues 91–102; sequence EEAELEDSDDEE. The span at 103–116 shows a compositional bias: basic and acidic residues; sequence KPVKQDDFPKDFGP. Phosphoserine is present on Ser-144. A G-patch domain is found at 149–195; the sequence is TKGIGQKLLQKMGYVPGRGLGKNAQGIINPIEAKQRKGKGAVGAYGS. The disordered stretch occupies residues 179-236; that stretch reads IEAKQRKGKGAVGAYGSERTTQSMQDFPVVDSEEEAEEEFQKELSQWRKDPSGSKKKP. Position 210 is a phosphoserine (Ser-210). Positions 217–231 are enriched in basic and acidic residues; it reads EFQKELSQWRKDPSG. Positions 700–705 match the Nuclear localization signal motif; it reads VKDKFN. The tract at residues 710–734 is required for nuclear speckle localization; it reads IMNRAVSSNVGAYMQPGARENIAYL.

Belongs to the TFP11/STIP family. Identified in the spliceosome C complex. Found in the Intron Large (IL) complex, a post-mRNA release spliceosomal complex containing the excised intron, U2, U5 and U6 snRNPs, and splicing factors. Interacts with TUFT1. Interacts with DHX15; indicative for a recruitment of DHX15 to the IL complex. Interacts with GCFC2.

It is found in the cytoplasm. It localises to the nucleus. Involved in pre-mRNA splicing, specifically in spliceosome disassembly during late-stage splicing events. Intron turnover seems to proceed through reactions in two lariat-intron associated complexes termed Intron Large (IL) and Intron Small (IS). In cooperation with DHX15 seems to mediate the transition of the U2, U5 and U6 snRNP-containing IL complex to the snRNP-free IS complex leading to efficient debranching and turnover of excised introns. May play a role in the differentiation of ameloblasts and odontoblasts or in the forming of the enamel extracellular matrix. In Homo sapiens (Human), this protein is Tuftelin-interacting protein 11 (TFIP11).